A 569-amino-acid polypeptide reads, in one-letter code: MTDRKTNLPEEPIFEEAEDDGCPSIENSSHLSVPTVEENKDFSEYNGEEAEEVVVPEKPASAYATVSIMCLCMAFGGFMSGWDTGTISGFVNQTDFLRRFGNYSHSKNTYYLSNVRTGLIVSIFNVGSAIGCLFLSKLGDIYGRCMGLIIVIVVYMVGIVIQIASIDKWYQYFIGRIIAGIGAGSISVLAPMLISETAPKHIRGTLLACWQLMVTFAIFLGYCTNYGTKTYSNSVQWRVPLGLCFAWAIIMIGGMTFVPESPRFLVQVGKIEQAKASFAKSNKLSVDDPAVVAEIDLLVAGVEAEEAMGTASWKELFSRKTKVFQRLTMTVMINSLQQLTGDNYFFYYGTTIFKSVGMNDSFETSIVLGIVNFASCFFSLYSVDKLGRRRCLLLGAATMTACMVIYASVGVTRLYPNGKSEPSSKGAGNCTIVFTCFYIFCFSCTWGPVCYVIISETFPLRVRSKCMSVATAANLLWGFLIGFFTPFITSAINFYYGYVFMGCLAFSYFYVFFFVPETKGLTLEEVDEMWMDGVLPWKSESWVPASRRDGDYDNEKLQHDEKPFYKRMF.

The disordered stretch occupies residues 1 to 38; sequence MTDRKTNLPEEPIFEEAEDDGCPSIENSSHLSVPTVEE. Residues 1–61 lie on the Cytoplasmic side of the membrane; that stretch reads MTDRKTNLPE…EVVVPEKPAS (61 aa). Over residues 12-21 the composition is skewed to acidic residues; it reads PIFEEAEDDG. The chain crosses the membrane as a helical span at residues 62-82; that stretch reads AYATVSIMCLCMAFGGFMSGW. The Extracellular segment spans residues 83 to 118; sequence DTGTISGFVNQTDFLRRFGNYSHSKNTYYLSNVRTG. Asparagine 92 and asparagine 102 each carry an N-linked (GlcNAc...) asparagine glycan. A helical transmembrane segment spans residues 119-139; that stretch reads LIVSIFNVGSAIGCLFLSKLG. Topologically, residues 140 to 145 are cytoplasmic; the sequence is DIYGRC. The helical transmembrane segment at 146–166 threads the bilayer; it reads MGLIIVIVVYMVGIVIQIASI. At 167–176 the chain is on the extracellular side; the sequence is DKWYQYFIGR. The chain crosses the membrane as a helical span at residues 177-197; sequence IIAGIGAGSISVLAPMLISET. Topologically, residues 198 to 203 are cytoplasmic; it reads APKHIR. The chain crosses the membrane as a helical span at residues 204 to 224; that stretch reads GTLLACWQLMVTFAIFLGYCT. Residues 225 to 238 lie on the Extracellular side of the membrane; the sequence is NYGTKTYSNSVQWR. The helical transmembrane segment at 239–259 threads the bilayer; it reads VPLGLCFAWAIIMIGGMTFVP. At 260-342 the chain is on the cytoplasmic side; it reads ESPRFLVQVG…INSLQQLTGD (83 aa). Residues 343 to 359 traverse the membrane as a helical segment; the sequence is NYFFYYGTTIFKSVGMN. The Extracellular portion of the chain corresponds to 360-365; that stretch reads DSFETS. A helical membrane pass occupies residues 366–383; sequence IVLGIVNFASCFFSLYSV. Over 384 to 390 the chain is Cytoplasmic; sequence DKLGRRR. A helical membrane pass occupies residues 391–411; it reads CLLLGAATMTACMVIYASVGV. Residues 412-433 lie on the Extracellular side of the membrane; the sequence is TRLYPNGKSEPSSKGAGNCTIV. Asparagine 429 is a glycosylation site (N-linked (GlcNAc...) asparagine). Residues 434 to 454 form a helical membrane-spanning segment; sequence FTCFYIFCFSCTWGPVCYVII. Residues 455 to 471 lie on the Cytoplasmic side of the membrane; sequence SETFPLRVRSKCMSVAT. Residues 472–492 form a helical membrane-spanning segment; the sequence is AANLLWGFLIGFFTPFITSAI. Asparagine 493 is a topological domain (extracellular). A helical membrane pass occupies residues 494 to 514; it reads FYYGYVFMGCLAFSYFYVFFF. The Cytoplasmic portion of the chain corresponds to 515–569; that stretch reads VPETKGLTLEEVDEMWMDGVLPWKSESWVPASRRDGDYDNEKLQHDEKPFYKRMF.

It belongs to the major facilitator superfamily. Sugar transporter (TC 2.A.1.1) family.

It localises to the membrane. Functionally, probable glucose transporter. This chain is Hexose transporter HXT8 (HXT8), found in Saccharomyces cerevisiae (strain ATCC 204508 / S288c) (Baker's yeast).